The chain runs to 489 residues: CBL-interacting serine/threonine-protein kinase 12 (489 aa).

A Protein kinase domain is found at 26-280; that stretch reads YEMGKLLGHG…FPEIMENSWF (255 aa). ATP contacts are provided by residues 32 to 40 and K55; that span reads LGHGTFAKV. The active-site Proton acceptor is the D148. Positions 166-195 are activation loop; sequence DFGLSAVSDQIRQDGLFHTFCGTPAYVAPE. S170 is subject to Phosphoserine. A Phosphothreonine modification is found at T184. One can recognise an NAF domain in the interval 336-360; it reads PRPASLNAFDIISFSQGFDLSGLFD. A PPI region spans residues 363-392; it reads GEGSRFVSGAPVSKIISKLEEIAKVVSFTV.

Belongs to the protein kinase superfamily. CAMK Ser/Thr protein kinase family. SNF1 subfamily. In terms of assembly, interacts with CBL2 and CBL3. The cofactor is Mn(2+). In terms of tissue distribution, expressed in roots and shoots.

It carries out the reaction L-seryl-[protein] + ATP = O-phospho-L-seryl-[protein] + ADP + H(+). The enzyme catalyses L-threonyl-[protein] + ATP = O-phospho-L-threonyl-[protein] + ADP + H(+). CIPK serine-threonine protein kinases interact with CBL proteins. Binding of a CBL protein to the regulatory NAF domain of CIPK protein lead to the activation of the kinase in a calcium-dependent manner. The sequence is that of CBL-interacting serine/threonine-protein kinase 12 (CIPK12) from Arabidopsis thaliana (Mouse-ear cress).